The sequence spans 232 residues: MQSTDISTNKIKFTVDKFNYVVKLSVLKNTHKITIKCTHNEEFYCWTFMTCEIIKSDYSSNSFYYDSSNSSINENINDENSNFLSINICPEMLFNILTAFKNNMLDKIYQINFPQDFDSVKSNLSILLTITLPLMNNFPDIKTIILEPKNINEPKRCSLKLMRQSFIIQQKNNEKFEKLSEKIEKMGKELTELQTVHNGLVKYIKEKYVRLDDLVDFVNKRDIDVITQVKKN.

It belongs to the mimivirus R73/L269/L862 family.

This is an uncharacterized protein from Acanthamoeba polyphaga mimivirus (APMV).